A 427-amino-acid chain; its full sequence is Retron Mx65 reverse transcriptase (427 aa).

A Reverse transcriptase domain is found at 136-366 (RHYSIHRPRE…GAQRVTGVTV (231 aa)). Positions 219, 315, and 316 each coordinate Mg(2+).

This sequence belongs to the bacterial reverse transcriptase family.

The enzyme catalyses DNA(n) + a 2'-deoxyribonucleoside 5'-triphosphate = DNA(n+1) + diphosphate. In terms of biological role, reverse transcriptase (RT) responsible for synthesis of msDNA-Mx65 (a branched molecule with RNA linked by a 2',5'-phosphodiester bond to ssDNA). The retron transcript serves as primer (from a conserved internal G residue) and template for the reaction, and codes for the RT. The retron is involved in antiviral defense. The chain is Retron Mx65 reverse transcriptase from Myxococcus xanthus.